We begin with the raw amino-acid sequence, 316 residues long: Transaldolase (316 aa).

The active-site Schiff-base intermediate with substrate is the Lys-126.

The protein belongs to the transaldolase family. Type 1 subfamily. As to quaternary structure, homodimer.

It is found in the cytoplasm. The catalysed reaction is D-sedoheptulose 7-phosphate + D-glyceraldehyde 3-phosphate = D-erythrose 4-phosphate + beta-D-fructose 6-phosphate. It functions in the pathway carbohydrate degradation; pentose phosphate pathway; D-glyceraldehyde 3-phosphate and beta-D-fructose 6-phosphate from D-ribose 5-phosphate and D-xylulose 5-phosphate (non-oxidative stage): step 2/3. Functionally, transaldolase is important for the balance of metabolites in the pentose-phosphate pathway. The chain is Transaldolase from Methylibium petroleiphilum (strain ATCC BAA-1232 / LMG 22953 / PM1).